Reading from the N-terminus, the 387-residue chain is 8-amino-7-oxononanoate synthase (387 aa).

Substrate is bound at residue R20. Pyridoxal 5'-phosphate is bound at residue 107-108; sequence GY. Substrate is bound at residue H132. Pyridoxal 5'-phosphate contacts are provided by S181, H209, and T238. An N6-(pyridoxal phosphate)lysine modification is found at K241. T355 contributes to the substrate binding site.

This sequence belongs to the class-II pyridoxal-phosphate-dependent aminotransferase family. BioF subfamily. As to quaternary structure, homodimer. Requires pyridoxal 5'-phosphate as cofactor.

The catalysed reaction is 6-carboxyhexanoyl-[ACP] + L-alanine + H(+) = (8S)-8-amino-7-oxononanoate + holo-[ACP] + CO2. The protein operates within cofactor biosynthesis; biotin biosynthesis. In terms of biological role, catalyzes the decarboxylative condensation of pimeloyl-[acyl-carrier protein] and L-alanine to produce 8-amino-7-oxononanoate (AON), [acyl-carrier protein], and carbon dioxide. The sequence is that of 8-amino-7-oxononanoate synthase from Dechloromonas aromatica (strain RCB).